Reading from the N-terminus, the 483-residue chain is Chromosomal replication initiator protein DnaA (483 aa).

The domain I, interacts with DnaA modulators stretch occupies residues 1–71 (MKEFWQTCVS…EALAAEWYQR (71 aa)). The domain II stretch occupies residues 71–145 (RPVQVQFELP…DAANIVYERS (75 aa)). The interval 146–362 (RLNTDLTFEN…GALRKVLAYA (217 aa)) is domain III, AAA+ region. Residues Gly190, Gly192, Lys193, and Thr194 each coordinate ATP. The tract at residues 363-483 (RFHGREALNV…LHVLEQTLKG (121 aa)) is domain IV, binds dsDNA.

The protein belongs to the DnaA family. In terms of assembly, oligomerizes as a right-handed, spiral filament on DNA at oriC.

The protein resides in the cytoplasm. Functionally, plays an essential role in the initiation and regulation of chromosomal replication. ATP-DnaA binds to the origin of replication (oriC) to initiate formation of the DNA replication initiation complex once per cell cycle. Binds the DnaA box (a 9 base pair repeat at the origin) and separates the double-stranded (ds)DNA. Forms a right-handed helical filament on oriC DNA; dsDNA binds to the exterior of the filament while single-stranded (ss)DNA is stabiized in the filament's interior. The ATP-DnaA-oriC complex binds and stabilizes one strand of the AT-rich DNA unwinding element (DUE), permitting loading of DNA polymerase. After initiation quickly degrades to an ADP-DnaA complex that is not apt for DNA replication. Binds acidic phospholipids. The polypeptide is Chromosomal replication initiator protein DnaA (Bordetella avium (strain 197N)).